The sequence spans 1186 residues: Atrophin-1 (1186 aa).

3 disordered regions span residues 1-604, 618-763, and 781-858; these read MKTR…PTVT, ASSP…ARFN, and VPLE…HRPP. The Nuclear localization signal motif lies at 16-32; sequence RKKEAPGPREELRSRGR. Basic and acidic residues predominate over residues 17 to 29; that stretch reads KKEAPGPREELRS. A Phosphoserine modification is found at serine 34. A compositionally biased stretch (basic and acidic residues) spans 45 to 63; that stretch reads GKAEKSRQTAKKARVEEAS. 5 positions are modified to phosphoserine: serine 77, serine 79, serine 100, serine 102, and serine 106. Basic and acidic residues predominate over residues 107–127; it reads LDGRSLNDDGSSDPRDIDQDN. Over residues 128–151 the composition is skewed to polar residues; sequence RSTSPSIYSPGSVENDSDSSSGLS. Over residues 157-173 the composition is skewed to pro residues; that stretch reads PYHPPPLFPPSPQPPDS. Composition is skewed to low complexity over residues 258–270, 349–365, and 375–396; these read PISV…SGAP, PTLA…SSSA, and SSSS…SSAS. The segment covering 416–437 has biased composition (polar residues); sequence SLSVSNQPPKYTQPSLPSQAVW. A compositionally biased stretch (low complexity) spans 484-503; the sequence is QQQQQQQQQQQQQQQHHGNS. The tract at residues 513–563 is involved in binding BAIAP2; sequence HPLEGGSSHHAHPYAMSPSLGSLRPYPPGPAHLPPPHSQVSYSQAGPNGPP. Residues 537 to 549 are compositionally biased toward pro residues; it reads PYPPGPAHLPPPH. Composition is skewed to low complexity over residues 565–582 and 618–628; these read SSSS…YPCS and ASSPAGYKTAS. At serine 628 the chain carries Phosphoserine. Lysine 637 bears the N6-acetyllysine mark. Threonine 649 bears the Phosphothreonine mark. Position 657 is a phosphoserine (serine 657). Threonine 665 is modified (phosphothreonine). 2 stretches are compositionally biased toward pro residues: residues 689–714 and 735–748; these read GPGP…PASG and SPVP…PPPK. Phosphoserine; by MAPK8 is present on serine 735. 2 positions are modified to phosphoserine: serine 742 and serine 744. Residues 791 to 835 are compositionally biased toward basic and acidic residues; sequence KRADLVEKVRREAEQRAREEKEREREREREKEREREKERELERSV. Positions 875-890 are required for interaction with FAT1; sequence DTPALRTLSEYARPHV. Serine 892 carries the phosphoserine modification. The Nuclear export signal signature appears at 1029–1037; the sequence is ALGNDPLAR. An Asymmetric dimethylarginine modification is found at arginine 1111. A Glycyl lysine isopeptide (Lys-Gly) (interchain with G-Cter in SUMO2) cross-link involves residue lysine 1179.

In terms of assembly, interacts with NR2E1; the interaction represses the transcriptional activity of NR2E1. Interacts with BAIAP2, WWP1, WWP2, WWP3 and RERE. Interacts (via its N-terminus) with MTG8; the interaction enhances transcriptional repression of MTG8. Interacts with FAT1 (via a C-terminal domain). Interacts with PQBP1. Post-translationally, phosphorylated in vitro by MAPK8/JNK1 on Ser-735.

It localises to the nucleus. The protein localises to the cytoplasm. The protein resides in the perinuclear region. It is found in the cell junction. Its function is as follows. Transcriptional corepressor. Corepressor of MTG8 transcriptional repression. Recruits NR2E1 to repress transcription. Has some intrinsic repression activity. Promotes vascular smooth cell (VSMC) migration and orientation. This is Atrophin-1 (ATN1) from Pan troglodytes (Chimpanzee).